The following is a 558-amino-acid chain: REST corepressor spr-1 (558 aa).

The disordered stretch occupies residues 1 to 106 (MDLYDDDGES…KVKGPLSNTN (106 aa)). Residues 36–56 (TIEENVPEVEENTLLEEDSLV) are compositionally biased toward acidic residues. Basic residues predominate over residues 69–80 (KPSKSKRKRKRS). In terms of domain architecture, ELM2 spans 107–192 (KEINVGTEFQ…SAIAEVARRN (86 aa)). The 52-residue stretch at 193–244 (ELKDVWTDQEITLFENCYQIFGKNFSQIRSALCHRSLQSIVQFYYESKKRVK) folds into the SANT 1 domain. The segment at 271–325 (AIFESMCDNCGEKAENMQINNAMNRPECRACLIYFNQTGVPRPTSLRLVLAERIR) adopts a GATA-type zinc-finger fold. The segment covering 378–402 (CTENGNVGETSSPSAQKTEIQSESD) has biased composition (polar residues). The disordered stretch occupies residues 378 to 406 (CTENGNVGETSSPSAQKTEIQSESDGSGP). The 52-residue stretch at 481-532 (HYSQDWTQLERSQVIRCFNMYGAHFEHIADVIGTKTPDQVYQFYLENQKAID) folds into the SANT 2 domain.

It belongs to the CoREST family. As to quaternary structure, probably part of a large repressor complex. Interacts with histone demethylase spr-5/lsd-1.

It localises to the nucleus. Functionally, probable corepressor protein, which probably participates in the transcriptional repression of the presenilin protein hop-1. Probably acts via the formation of a multiprotein complex that deacetylates and demethylates specific sites on histones. Acts redundantly with the transcriptional repressor lin-35 to play a role in vulval morphogenesis and promote germline proliferation. In Caenorhabditis elegans, this protein is REST corepressor spr-1.